Reading from the N-terminus, the 206-residue chain is Uridine kinase (206 aa).

11-18 provides a ligand contact to ATP; it reads GGSGSGKT.

Belongs to the uridine kinase family.

The protein localises to the cytoplasm. The enzyme catalyses uridine + ATP = UMP + ADP + H(+). It carries out the reaction cytidine + ATP = CMP + ADP + H(+). It participates in pyrimidine metabolism; CTP biosynthesis via salvage pathway; CTP from cytidine: step 1/3. Its pathway is pyrimidine metabolism; UMP biosynthesis via salvage pathway; UMP from uridine: step 1/1. The polypeptide is Uridine kinase (Macrococcus caseolyticus (strain JCSC5402) (Macrococcoides caseolyticum)).